Consider the following 1416-residue polypeptide: MTELLQWARHHWRRLSHGRAQGEDERPYNYASLLACGGKSSRTPRPAGKHRVVIPHLQCFKDEYERFSGTYVNNRIRTTKYTLLNFVPRNLFEQFHRAANLYFLFLVVLNWVPLVEAFQKEITMLPLVVVLTIIAIKDGLEDYRKYKIDKQINNLITKVYSRKEKKYIDCCWKNVTVGDFIRLSCNEIIPADMVLLFSTDPDGICHIETSGLDGESNLKQRQVVRGYTEQDSEVDPEKFSSRIECESPNNDLSRFRGFLEHANKERVGLSKENLLLRGCTIRNTEAVVGIVVYAGHETKAMLNNSGPRYKRSKLERRANTDVLWCVLLLIVMCLTGALGHGIWLSRYENMLFFNIPEPDGRVISPVLTGFYVFWTMIILLQVLIPISLYVSIEIVKLGQIYFIQSDVDFYNEKMDSTIQCRALNITEDLGQIQYLFSDKTGTLTENKMVFRRCSVAGFDYCHEENAKRLESYQEAVSEEEECTDTLGGSLSNMARPRAQGCRTVPSGPLGKPSAQLSGSTSAVGNGEGSGEVPHSRQAAFSSPMETDVVPDTRLLDKFSQLTPQLLTGLDGTAQSSPLETLYIMDFFIALAICNTVVVSAPNQPRQKIGLSSLGGMPIKSLEEIKNIFQKLSVRRSSSPSLASGKDSSSGTPCAFVSRISFFSRPKLSPPMEDESSQMDEIPQASNSACCTETEAQNRAVGLSVSSAEALSGPPPSASNLCYEAESPDEAALVYAARAYRCTLQSRTPEQVMVDFAALGSLTFQLLHILPFDSVRKRMSVVVRHPLSKQVVVYTKGADSVIMELLSVAASDGTNPEQQMIIRERTQRHLDEYAKRGLRTLCVAKKVMSDTEYAEWLRNHFLAETSIDNREELLVESAMRLENKLTLLGATGIEDRLQEGVPESIEALHQAGIKIWMLTGDKQETAVNIAYACKLLEPDDKLFILNTQSQDACGMLMSAILEELQKRAQVSPELASSRKNFPQPSDAQGQGRAGLVITGKTLEFALQESLQRQFLELTAWCQAVICCRATPLQKSEVVKLVRNHHHVLTLPIGDGANDVSMIQVADIGIGVSGQEGMQAVMASDFAISQFRHLSKLLLVHGHWCYTRLSNMILYFFYKNVAYVNLLFWYQFFCGFSGTSMTDYWVLIFFNLLFTSVPPIIYGVLEKDVSAETLLQLPELYRSGQRSEEYLPLTFWITLLDAFYQSLVCFFVPYFTYQGSDIDIFTFGNPLNTAALFIILLHLVIESKSLTWIHMLVTVGSILSYFFFALAFGALCVTCNPPSNPYGIMRKHMLDPVFYLVCVLTTFVALLPRFLYRVLQGSVFPSPVLRAKYFDRLPPEERAEALKRWRGTAKVNHVASKHASQSAAMSGRPTPGSSAVLAMKSATVSTVEQSTRETALDRGCSEPGASKMTGSSAS.

Residues 1-97 are Cytoplasmic-facing; the sequence is MTELLQWARH…PRNLFEQFHR (97 aa). Residues 98–118 traverse the membrane as a helical segment; the sequence is AANLYFLFLVVLNWVPLVEAF. At 119-120 the chain is on the exoplasmic loop side; sequence QK. The chain crosses the membrane as a helical span at residues 121-141; it reads EITMLPLVVVLTIIAIKDGLE. Residues 142 to 321 lie on the Cytoplasmic side of the membrane; the sequence is DYRKYKIDKQ…SKLERRANTD (180 aa). The helical transmembrane segment at 322–342 threads the bilayer; the sequence is VLWCVLLLIVMCLTGALGHGI. The Exoplasmic loop portion of the chain corresponds to 343–365; sequence WLSRYENMLFFNIPEPDGRVISP. A helical transmembrane segment spans residues 366–386; that stretch reads VLTGFYVFWTMIILLQVLIPI. The Cytoplasmic portion of the chain corresponds to 387–1110; the sequence is SLYVSIEIVK…HWCYTRLSNM (724 aa). Residue aspartate 438 is the 4-aspartylphosphate intermediate of the active site. Positions 438, 439, and 440 each coordinate ATP. Residue aspartate 438 participates in Mg(2+) binding. Position 440 (threonine 440) interacts with Mg(2+). Residues 498–544 are disordered; that stretch reads AQGCRTVPSGPLGKPSAQLSGSTSAVGNGEGSGEVPHSRQAAFSSPM. Over residues 514–523 the composition is skewed to polar residues; that stretch reads AQLSGSTSAV. Residues glutamate 729, phenylalanine 771, lysine 795, arginine 838, threonine 918, glycine 919, and aspartate 920 each coordinate ATP. A disordered region spans residues 971–990; it reads PELASSRKNFPQPSDAQGQG. Over residues 976–987 the composition is skewed to polar residues; that stretch reads SRKNFPQPSDAQ. ATP is bound by residues 993–1000, arginine 1027, and lysine 1033; that span reads GLVITGKT. Aspartate 1053 contributes to the Mg(2+) binding site. ATP-binding residues include asparagine 1056 and aspartate 1057. Position 1057 (aspartate 1057) interacts with Mg(2+). Residues 1111 to 1131 form a helical membrane-spanning segment; that stretch reads ILYFFYKNVAYVNLLFWYQFF. The Exoplasmic loop portion of the chain corresponds to 1132 to 1142; it reads CGFSGTSMTDY. Residues 1143-1163 form a helical membrane-spanning segment; it reads WVLIFFNLLFTSVPPIIYGVL. Residues 1164 to 1192 lie on the Cytoplasmic side of the membrane; that stretch reads EKDVSAETLLQLPELYRSGQRSEEYLPLT. Residues 1193–1213 form a helical membrane-spanning segment; sequence FWITLLDAFYQSLVCFFVPYF. Residues 1214–1221 are Exoplasmic loop-facing; sequence TYQGSDID. Residues 1222–1242 form a helical membrane-spanning segment; it reads IFTFGNPLNTAALFIILLHLV. Over 1243-1252 the chain is Cytoplasmic; the sequence is IESKSLTWIH. A helical transmembrane segment spans residues 1253 to 1273; sequence MLVTVGSILSYFFFALAFGAL. Residues 1274 to 1289 are Exoplasmic loop-facing; sequence CVTCNPPSNPYGIMRK. A helical membrane pass occupies residues 1290–1310; the sequence is HMLDPVFYLVCVLTTFVALLP. The Cytoplasmic portion of the chain corresponds to 1311–1416; the sequence is RFLYRVLQGS…ASKMTGSSAS (106 aa). The interval 1358–1416 is disordered; sequence SKHASQSAAMSGRPTPGSSAVLAMKSATVSTVEQSTRETALDRGCSEPGASKMTGSSAS. Position 1361-1368 (1361-1368) interacts with ATP; the sequence is ASQSAAMS. Over residues 1392–1402 the composition is skewed to basic and acidic residues; sequence STRETALDRGC.

The protein belongs to the cation transport ATPase (P-type) (TC 3.A.3) family. Type IV subfamily. Component of a P4-ATPase flippase complex which consists of a catalytic alpha subunit ATP10A and an accessory beta subunit TMEM30A. Mg(2+) serves as cofactor. Post-translationally, autophosphorylated at the conserved aspartate of the P-type ATPase signature sequence. Expressed at low amounts in liver, brain, testes, and kidney (at protein level). Expressed in placenta.

The protein resides in the cell membrane. The protein localises to the endoplasmic reticulum membrane. It catalyses the reaction ATP + H2O + phospholipidSide 1 = ADP + phosphate + phospholipidSide 2.. It carries out the reaction a beta-D-glucosyl-(1&lt;-&gt;1')-N-acylsphing-4-enine(out) + ATP + H2O = a beta-D-glucosyl-(1&lt;-&gt;1')-N-acylsphing-4-enine(in) + ADP + phosphate + H(+). Its function is as follows. Catalytic component of a P4-ATPase flippase complex, which catalyzes the hydrolysis of ATP coupled to the transport of glucosylceramide (GlcCer) from the outer to the inner leaflet of the plasma membrane. This is Phospholipid-transporting ATPase VD (Atp10d) from Mus musculus (Mouse).